We begin with the raw amino-acid sequence, 244 residues long: tRNA pseudouridine synthase A (244 aa).

The active-site Nucleophile is aspartate 55. A substrate-binding site is contributed by tyrosine 113.

This sequence belongs to the tRNA pseudouridine synthase TruA family. In terms of assembly, homodimer.

The enzyme catalyses uridine(38/39/40) in tRNA = pseudouridine(38/39/40) in tRNA. In terms of biological role, formation of pseudouridine at positions 38, 39 and 40 in the anticodon stem and loop of transfer RNAs. The chain is tRNA pseudouridine synthase A from Phytoplasma mali (strain AT).